A 174-amino-acid polypeptide reads, in one-letter code: Co-chaperone protein HscB homolog (174 aa).

Positions 2 to 74 (NYFELFKFPP…IRRAEHMLSL (73 aa)) constitute a J domain.

This sequence belongs to the HscB family. As to quaternary structure, interacts with HscA and stimulates its ATPase activity.

Functionally, co-chaperone involved in the maturation of iron-sulfur cluster-containing proteins. Seems to help targeting proteins to be folded toward HscA. This is Co-chaperone protein HscB homolog from Shewanella oneidensis (strain ATCC 700550 / JCM 31522 / CIP 106686 / LMG 19005 / NCIMB 14063 / MR-1).